A 366-amino-acid chain; its full sequence is G kinase-anchoring protein 1 (366 aa).

An interaction with IRS1 region spans residues Met-1–Asp-95. 2 disordered regions span residues Gln-20 to Asn-110 and Glu-147 to Leu-177. Ser-23, Ser-25, and Ser-27 each carry phosphoserine. Polar residues predominate over residues Thr-39–Thr-50. A coiled-coil region spans residues Ser-47–Ala-77. Residue Ser-106 is modified to Phosphoserine; by PKG. Coiled-coil stretches lie at residues Ala-128–Val-160 and Glu-243–Gly-353.

Belongs to the GKAP1 family. In terms of assembly, interacts with PRKG1 and IRS1.

The protein localises to the golgi apparatus. Its function is as follows. Regulates insulin-dependent IRS1 tyrosine phosphorylation in adipocytes by modulating the availability of IRS1 to IR tyrosine kinase. Its association with IRS1 is required for insulin-induced translocation of SLC2A4 to the cell membrane. Involved in TNF-induced impairment of insulin-dependent IRS1 tyrosine phosphorylation. The protein is G kinase-anchoring protein 1 (GKAP1) of Homo sapiens (Human).